A 209-amino-acid polypeptide reads, in one-letter code: Large ribosomal subunit protein uL3 (209 aa).

A disordered region spans residues 130-154; it reads RGPMSHGSKFHRAVGSMGASSDPSR.

The protein belongs to the universal ribosomal protein uL3 family. In terms of assembly, part of the 50S ribosomal subunit. Forms a cluster with proteins L14 and L19.

Its function is as follows. One of the primary rRNA binding proteins, it binds directly near the 3'-end of the 23S rRNA, where it nucleates assembly of the 50S subunit. This Clostridium kluyveri (strain NBRC 12016) protein is Large ribosomal subunit protein uL3.